The sequence spans 485 residues: E3 ubiquitin-protein ligase TRIM68 (485 aa).

The segment at 16–61 adopts an RING-type zinc-finger fold; sequence CPICMTFLREPVSISCGHTFCHSCLSGLWKLPGESQNLSYTCPLCR. The B box-type zinc-finger motif lies at 93 to 134; it reads LKTDVCDLHKEQLTMFCKEDDMVTCEACKQSPEHEAHSVVPI. Zn(2+) is bound by residues cysteine 98, histidine 101, cysteine 120, and histidine 126. Residues 144–226 are a coiled coil; sequence KLQQALEHLR…EQEKGETASK (83 aa). One can recognise a B30.2/SPRY domain in the interval 285–483; that stretch reads LKTDCRVLGL…TPLTICTLGG (199 aa).

This sequence belongs to the TRIM/RBCC family. Interacts with AR/androgen receptor (via ligand-binding domain). Interacts with KAT5/TIP60. Auto-ubiquitinated.

It is found in the cytoplasm. Its subcellular location is the perinuclear region. The protein resides in the nucleus. It carries out the reaction S-ubiquitinyl-[E2 ubiquitin-conjugating enzyme]-L-cysteine + [acceptor protein]-L-lysine = [E2 ubiquitin-conjugating enzyme]-L-cysteine + N(6)-ubiquitinyl-[acceptor protein]-L-lysine.. The protein operates within protein modification; protein ubiquitination. Functionally, functions as a ubiquitin E3 ligase. Acts as a coactivator of androgen receptor (AR) depending on its ubiquitin ligase activity. This Mus musculus (Mouse) protein is E3 ubiquitin-protein ligase TRIM68 (Trim68).